The sequence spans 242 residues: Glutamate transport ATP-binding protein GluA (242 aa).

The 235-residue stretch at Ile-2 to Leu-236 folds into the ABC transporter domain. Residue Gly-34–Ser-41 participates in ATP binding.

This sequence belongs to the ABC transporter superfamily. In terms of assembly, the complex is composed of two ATP-binding proteins (GluA), two transmembrane proteins (GluC and GluD) and a solute-binding protein (GluB).

The protein localises to the cell membrane. It carries out the reaction a polar amino acid(out) + ATP + H2O = a polar amino acid(in) + ADP + phosphate + H(+). The catalysed reaction is L-glutamate(out) + ATP + H2O = L-glutamate(in) + ADP + phosphate + H(+). In terms of biological role, part of the ABC transporter complex GluABCD involved in glutamate uptake. Probably responsible for energy coupling to the transport system. This is Glutamate transport ATP-binding protein GluA from Corynebacterium glutamicum (strain ATCC 13032 / DSM 20300 / JCM 1318 / BCRC 11384 / CCUG 27702 / LMG 3730 / NBRC 12168 / NCIMB 10025 / NRRL B-2784 / 534).